The following is a 256-amino-acid chain: Imidazole glycerol phosphate synthase subunit HisF (256 aa).

Catalysis depends on residues D11 and D130.

Belongs to the HisA/HisF family. As to quaternary structure, heterodimer of HisH and HisF.

The protein localises to the cytoplasm. The enzyme catalyses 5-[(5-phospho-1-deoxy-D-ribulos-1-ylimino)methylamino]-1-(5-phospho-beta-D-ribosyl)imidazole-4-carboxamide + L-glutamine = D-erythro-1-(imidazol-4-yl)glycerol 3-phosphate + 5-amino-1-(5-phospho-beta-D-ribosyl)imidazole-4-carboxamide + L-glutamate + H(+). Its pathway is amino-acid biosynthesis; L-histidine biosynthesis; L-histidine from 5-phospho-alpha-D-ribose 1-diphosphate: step 5/9. In terms of biological role, IGPS catalyzes the conversion of PRFAR and glutamine to IGP, AICAR and glutamate. The HisF subunit catalyzes the cyclization activity that produces IGP and AICAR from PRFAR using the ammonia provided by the HisH subunit. The chain is Imidazole glycerol phosphate synthase subunit HisF from Cupriavidus metallidurans (strain ATCC 43123 / DSM 2839 / NBRC 102507 / CH34) (Ralstonia metallidurans).